A 343-amino-acid chain; its full sequence is Vacuolar membrane protein Kpol_1003p17 (343 aa).

The segment at 45–65 (TTDTSGTSTSSRDVSSGQSTL) is disordered. A helical membrane pass occupies residues 101 to 121 (FIAVGSIIGGIFGGVLIWWMI). Residues 235-343 (EVLQQQRQRR…YLDDMLENDN (109 aa)) form a disordered region. Over residues 254–264 (ELPSTPPSNFK) the composition is skewed to polar residues. Residues 269–280 (KPERSASPERKS) show a composition bias toward basic and acidic residues. The segment covering 281-290 (RSPIRQHRKN) has biased composition (basic residues).

This sequence belongs to the PRM5 family.

It localises to the vacuole membrane. The polypeptide is Vacuolar membrane protein Kpol_1003p17 (Vanderwaltozyma polyspora (strain ATCC 22028 / DSM 70294 / BCRC 21397 / CBS 2163 / NBRC 10782 / NRRL Y-8283 / UCD 57-17) (Kluyveromyces polysporus)).